Here is a 72-residue protein sequence, read N- to C-terminus: Sperm protein associated with the nucleus on the X chromosome N1 (72 aa).

Positions 1 to 40 (MEKPTSSTNGEKRKSPCDSNNKNDEMQETPNRDLVLEPSL) are disordered. The span at 10–35 (GEKRKSPCDSNNKNDEMQETPNRDLV) shows a compositional bias: basic and acidic residues.

The protein belongs to the SPAN-X family.

This Gorilla gorilla gorilla (Western lowland gorilla) protein is Sperm protein associated with the nucleus on the X chromosome N1 (SPANXN1).